A 498-amino-acid chain; its full sequence is ATP synthase subunit beta, chloroplastic (498 aa).

Threonine 6 is subject to Phosphothreonine. Serine 13 bears the Phosphoserine mark. 172–179 provides a ligand contact to ATP; sequence GGAGVGKT.

This sequence belongs to the ATPase alpha/beta chains family. As to quaternary structure, F-type ATPases have 2 components, CF(1) - the catalytic core - and CF(0) - the membrane proton channel. CF(1) has five subunits: alpha(3), beta(3), gamma(1), delta(1), epsilon(1). CF(0) has four main subunits: a(1), b(1), b'(1) and c(9-12).

The protein resides in the plastid. It localises to the chloroplast thylakoid membrane. It carries out the reaction ATP + H2O + 4 H(+)(in) = ADP + phosphate + 5 H(+)(out). In terms of biological role, produces ATP from ADP in the presence of a proton gradient across the membrane. The catalytic sites are hosted primarily by the beta subunits. The polypeptide is ATP synthase subunit beta, chloroplastic (Arabis hirsuta (Hairy rock-cress)).